A 227-amino-acid polypeptide reads, in one-letter code: MTATAPVITIDGPSGAGKGTLCKAMAEALQWHLLDSGAIYRVLALAALHHQVDISSEEALAPIAAHLDVRFISHSGEIEVILEGENVSTEIRTQDVSNTASRVAAFPRVREALLRRQRGFRELPGLIADGRDMGTVVFPDAPVKIFLDASSEERASRRMLQLQEKGFSVNFERLLSEIKERDDRDRNRAIAPLVPAADALVLDSTTMSIEQVIEIALNYAREKLALV.

12 to 20 (GPSGAGKGT) provides a ligand contact to ATP.

Belongs to the cytidylate kinase family. Type 1 subfamily.

Its subcellular location is the cytoplasm. The enzyme catalyses CMP + ATP = CDP + ADP. It catalyses the reaction dCMP + ATP = dCDP + ADP. The protein is Cytidylate kinase of Erwinia tasmaniensis (strain DSM 17950 / CFBP 7177 / CIP 109463 / NCPPB 4357 / Et1/99).